A 122-amino-acid chain; its full sequence is Large ribosomal subunit protein bL12 (122 aa).

It belongs to the bacterial ribosomal protein bL12 family. In terms of assembly, homodimer. Part of the ribosomal stalk of the 50S ribosomal subunit. Forms a multimeric L10(L12)X complex, where L10 forms an elongated spine to which 2 to 4 L12 dimers bind in a sequential fashion. Binds GTP-bound translation factors.

Its function is as follows. Forms part of the ribosomal stalk which helps the ribosome interact with GTP-bound translation factors. Is thus essential for accurate translation. The chain is Large ribosomal subunit protein bL12 from Mycoplasma genitalium (strain ATCC 33530 / DSM 19775 / NCTC 10195 / G37) (Mycoplasmoides genitalium).